Reading from the N-terminus, the 155-residue chain is Protein-export protein SecB (155 aa).

The protein belongs to the SecB family. As to quaternary structure, homotetramer, a dimer of dimers. One homotetramer interacts with 1 SecA dimer.

It localises to the cytoplasm. In terms of biological role, one of the proteins required for the normal export of preproteins out of the cell cytoplasm. It is a molecular chaperone that binds to a subset of precursor proteins, maintaining them in a translocation-competent state. It also specifically binds to its receptor SecA. This is Protein-export protein SecB from Citrobacter koseri (strain ATCC BAA-895 / CDC 4225-83 / SGSC4696).